The following is a 250-amino-acid chain: Golgi SNAP receptor complex member 1 (250 aa).

At Ala2 the chain carries N-acetylalanine. Residues 2–229 are Cytoplasmic-facing; it reads AAGTSNYWED…QRINLRKRRD (228 aa). Positions 9-30 form a coiled coil; it reads WEDLRKQARQLENELDLKLVSF. The disordered stretch occupies residues 38 to 59; it reads SHSSARDGGRDRYSSDTTPLLN. Residues 41-51 are compositionally biased toward basic and acidic residues; sequence SARDGGRDRYS. The stretch at 68-95 forms a coiled coil; it reads ETMAIEIEQLLARLTGVNDKMAEYTNSA. At Ser141 the chain carries Phosphoserine. Residues 230–250 form a helical; Anchor for type IV membrane protein membrane-spanning segment; that stretch reads SLILGGVIGICTILLLLYAFH.

It belongs to the GOSR1 family. Component of several multiprotein Golgi SNARE complexes. Identified in a SNARE complex with BET1, STX5 and YKT6, in a SNARE complex with BET1L, STX5 and YKT6, in a SNARE complex with STX5, GOSR2, SEC22B and BET1, and in complex with STX5 and COG3. Interacts with GABARAPL2.

It localises to the golgi apparatus membrane. Involved in transport from the ER to the Golgi apparatus as well as in intra-Golgi transport. It belongs to a super-family of proteins called t-SNAREs or soluble NSF (N-ethylmaleimide-sensitive factor) attachment protein receptor. May play a protective role against hydrogen peroxide induced cytotoxicity under glutathione depleted conditions in neuronal cells by regulating the intracellular ROS levels via inhibition of p38 MAPK (MAPK11, MAPK12, MAPK13 and MAPK14). Participates in docking and fusion stage of ER to cis-Golgi transport. Plays an important physiological role in VLDL-transport vesicle-Golgi fusion and thus in VLDL delivery to the hepatic cis-Golgi. The sequence is that of Golgi SNAP receptor complex member 1 (GOSR1) from Cricetulus griseus (Chinese hamster).